A 212-amino-acid chain; its full sequence is MLASQVVSSVVKPSWFARPTCVVAADLIGKVLCRELTDSDGQQKILRMRISETEAYIGEGDAACHAHAGTRTPRTEIMYHIGGVFYVYLTYGIHHMLNLVSGPTESPEAVLIRAGFLIEGSARLMNEQLLDVNRQLNHIKQLAGPGKLTKGLQIDRTLYGKPITPASKVWVEDDGCQPLVSLRPRIGIDYAGDAKEWLLRYIWTDHPSLSKK.

This sequence belongs to the DNA glycosylase MPG family.

This chain is Putative 3-methyladenine DNA glycosylase, found in Psychrobacter cryohalolentis (strain ATCC BAA-1226 / DSM 17306 / VKM B-2378 / K5).